Here is a 125-residue protein sequence, read N- to C-terminus: Small ribosomal subunit protein uS12 (125 aa).

At Asp89 the chain carries 3-methylthioaspartic acid.

This sequence belongs to the universal ribosomal protein uS12 family. In terms of assembly, part of the 30S ribosomal subunit. Contacts proteins S8 and S17. May interact with IF1 in the 30S initiation complex.

In terms of biological role, with S4 and S5 plays an important role in translational accuracy. Its function is as follows. Interacts with and stabilizes bases of the 16S rRNA that are involved in tRNA selection in the A site and with the mRNA backbone. Located at the interface of the 30S and 50S subunits, it traverses the body of the 30S subunit contacting proteins on the other side and probably holding the rRNA structure together. The combined cluster of proteins S8, S12 and S17 appears to hold together the shoulder and platform of the 30S subunit. In Clostridium kluyveri (strain ATCC 8527 / DSM 555 / NBRC 12016 / NCIMB 10680 / K1), this protein is Small ribosomal subunit protein uS12.